The primary structure comprises 118 residues: Small ribosomal subunit protein mS41 (118 aa).

Residues 1-24 constitute a mitochondrion transit peptide; the sequence is MLRVVAKAQYPAAVRCFSTSHAAF.

The protein belongs to the mitochondrion-specific ribosomal protein mS41 family.

It is found in the mitochondrion. In terms of biological role, involved in telomere length regulation. This is Small ribosomal subunit protein mS41 (FYV4) from Yarrowia lipolytica (strain CLIB 122 / E 150) (Yeast).